The chain runs to 550 residues: Membrane protein insertase YidC (550 aa).

A helical transmembrane segment spans residues N6–D26. 2 disordered regions span residues A28 to A54 and Q111 to Y132. Residues K30–V52 are compositionally biased toward low complexity. Over residues Q111–K127 the composition is skewed to polar residues. 4 consecutive transmembrane segments (helical) span residues K346–V366, L421–L441, L459–I479, and P500–V520.

Belongs to the OXA1/ALB3/YidC family. Type 1 subfamily. Interacts with the Sec translocase complex via SecD. Specifically interacts with transmembrane segments of nascent integral membrane proteins during membrane integration.

It localises to the cell inner membrane. In terms of biological role, required for the insertion and/or proper folding and/or complex formation of integral membrane proteins into the membrane. Involved in integration of membrane proteins that insert both dependently and independently of the Sec translocase complex, as well as at least some lipoproteins. Aids folding of multispanning membrane proteins. The protein is Membrane protein insertase YidC of Cronobacter sakazakii (strain ATCC BAA-894) (Enterobacter sakazakii).